A 385-amino-acid chain; its full sequence is Acetate kinase (385 aa).

Asn8 serves as a coordination point for Mg(2+). ATP is bound at residue Lys15. Arg85 contributes to the substrate binding site. Catalysis depends on Asp142, which acts as the Proton donor/acceptor. ATP contacts are provided by residues 200-204 (HLGNG), 275-277 (DMR), and 323-327 (GIGEN). Glu373 serves as a coordination point for Mg(2+).

This sequence belongs to the acetokinase family. As to quaternary structure, homodimer. The cofactor is Mg(2+). Mn(2+) is required as a cofactor.

It is found in the cytoplasm. It carries out the reaction acetate + ATP = acetyl phosphate + ADP. It participates in metabolic intermediate biosynthesis; acetyl-CoA biosynthesis; acetyl-CoA from acetate: step 1/2. In terms of biological role, catalyzes the formation of acetyl phosphate from acetate and ATP. Can also catalyze the reverse reaction. The polypeptide is Acetate kinase (Francisella tularensis subsp. holarctica (strain OSU18)).